The primary structure comprises 142 residues: Large ribosomal subunit protein uL13 (142 aa).

The protein belongs to the universal ribosomal protein uL13 family. In terms of assembly, part of the 50S ribosomal subunit.

Its function is as follows. This protein is one of the early assembly proteins of the 50S ribosomal subunit, although it is not seen to bind rRNA by itself. It is important during the early stages of 50S assembly. In Pyrococcus horikoshii (strain ATCC 700860 / DSM 12428 / JCM 9974 / NBRC 100139 / OT-3), this protein is Large ribosomal subunit protein uL13.